The following is a 172-amino-acid chain: Shikimate kinase (172 aa).

11-16 (ASGKTE) provides a ligand contact to ATP. A Mg(2+)-binding site is contributed by threonine 15. Residues aspartate 33, arginine 57, and glycine 80 each contribute to the substrate site. Arginine 120 is an ATP binding site. Arginine 142 serves as a coordination point for substrate.

This sequence belongs to the shikimate kinase family. As to quaternary structure, monomer. The cofactor is Mg(2+).

Its subcellular location is the cytoplasm. The enzyme catalyses shikimate + ATP = 3-phosphoshikimate + ADP + H(+). It participates in metabolic intermediate biosynthesis; chorismate biosynthesis; chorismate from D-erythrose 4-phosphate and phosphoenolpyruvate: step 5/7. In terms of biological role, catalyzes the specific phosphorylation of the 3-hydroxyl group of shikimic acid using ATP as a cosubstrate. This is Shikimate kinase from Flavobacterium psychrophilum (strain ATCC 49511 / DSM 21280 / CIP 103535 / JIP02/86).